A 448-amino-acid chain; its full sequence is Tryptophan dimethylallyltransferase 1 (448 aa).

L-tryptophan is bound by residues 80-81 and glutamate 89; that span reads IL. Residues arginine 100, lysine 186, and tyrosine 188 each coordinate substrate. Residues tyrosine 190 and arginine 249 each coordinate L-tryptophan. The substrate site is built by arginine 262, lysine 264, tyrosine 266, glutamine 348, tyrosine 350, tyrosine 414, and tyrosine 418.

Belongs to the tryptophan dimethylallyltransferase family. In terms of assembly, homodimer.

It carries out the reaction L-tryptophan + dimethylallyl diphosphate = 4-(3-methylbut-2-enyl)-L-tryptophan + diphosphate. It functions in the pathway alkaloid biosynthesis; ergot alkaloid biosynthesis. In terms of biological role, tryptophan dimethylallyltransferase; part of the gene cluster that mediates the biosynthesis of fungal ergot alkaloid. DmaW catalyzes the first step of ergot alkaloid biosynthesis by condensing dimethylallyl diphosphate (DMAP) and tryptophan to form 4-dimethylallyl-L-tryptophan. The second step is catalyzed by the methyltransferase easF that methylates 4-dimethylallyl-L-tryptophan in the presence of S-adenosyl-L-methionine, resulting in the formation of 4-dimethylallyl-L-abrine. The catalase easC and the FAD-dependent oxidoreductase easE then transform 4-dimethylallyl-L-abrine to chanoclavine-I which is further oxidized by easD in the presence of NAD(+), resulting in the formation of chanoclavine-I aldehyde. Agroclavine dehydrogenase easG then mediates the conversion of chanoclavine-I aldehyde to agroclavine via a non-enzymatic adduct reaction: the substrate is an iminium intermediate that is formed spontaneously from chanoclavine-I aldehyde in the presence of glutathione. The presence of easA is not required to complete this reaction. Further conversion of agroclavine to paspalic acid is a two-step process involving oxidation of agroclavine to elymoclavine and of elymoclavine to paspalic acid, the second step being performed by the elymoclavine oxidase cloA. Paspalic acid is then further converted to D-lysergic acid. Ergopeptines are assembled from D-lysergic acid and three different amino acids by the D-lysergyl-peptide-synthetases composed each of a monomudular and a trimodular nonribosomal peptide synthetase subunit. LpsB and lpsC encode the monomodular subunits responsible for D-lysergic acid activation and incorporation into the ergopeptine backbone. LpsA1 and A2 subunits encode the trimodular nonribosomal peptide synthetase assembling the tripeptide portion of ergopeptines. LpsA1 is responsible for formation of the major ergopeptine, ergotamine, and lpsA2 for alpha-ergocryptine, the minor ergopeptine of the total alkaloid mixture elaborated by C.purpurea. D-lysergyl-tripeptides are assembled by the nonribosomal peptide synthetases and released as N-(D-lysergyl-aminoacyl)-lactams. Cyclolization of the D-lysergyl-tripeptides is performed by the Fe(2+)/2-ketoglutarate-dependent dioxygenase easH which introduces a hydroxyl group into N-(D-lysergyl-aminoacyl)-lactam at alpha-C of the aminoacyl residue followed by spontaneous condensation with the terminal lactam carbonyl group. This is Tryptophan dimethylallyltransferase 1 from Claviceps purpurea (strain 20.1) (Ergot fungus).